Here is a 359-residue protein sequence, read N- to C-terminus: Transaldolase (359 aa).

Lys139 serves as the catalytic Schiff-base intermediate with substrate.

This sequence belongs to the transaldolase family. Type 2 subfamily.

Its subcellular location is the cytoplasm. The catalysed reaction is D-sedoheptulose 7-phosphate + D-glyceraldehyde 3-phosphate = D-erythrose 4-phosphate + beta-D-fructose 6-phosphate. Its pathway is carbohydrate degradation; pentose phosphate pathway; D-glyceraldehyde 3-phosphate and beta-D-fructose 6-phosphate from D-ribose 5-phosphate and D-xylulose 5-phosphate (non-oxidative stage): step 2/3. Functionally, transaldolase is important for the balance of metabolites in the pentose-phosphate pathway. The polypeptide is Transaldolase (Thiobacillus denitrificans (strain ATCC 25259 / T1)).